Consider the following 177-residue polypeptide: Large ribosomal subunit protein uL6 (177 aa).

It belongs to the universal ribosomal protein uL6 family. Part of the 50S ribosomal subunit.

Its function is as follows. This protein binds to the 23S rRNA, and is important in its secondary structure. It is located near the subunit interface in the base of the L7/L12 stalk, and near the tRNA binding site of the peptidyltransferase center. This Bordetella avium (strain 197N) protein is Large ribosomal subunit protein uL6.